The following is a 107-amino-acid chain: Putative pterin-4-alpha-carbinolamine dehydratase (107 aa).

Belongs to the pterin-4-alpha-carbinolamine dehydratase family.

The catalysed reaction is (4aS,6R)-4a-hydroxy-L-erythro-5,6,7,8-tetrahydrobiopterin = (6R)-L-erythro-6,7-dihydrobiopterin + H2O. This Rubrobacter xylanophilus (strain DSM 9941 / JCM 11954 / NBRC 16129 / PRD-1) protein is Putative pterin-4-alpha-carbinolamine dehydratase.